The chain runs to 396 residues: NADH-quinone oxidoreductase subunit D (396 aa).

Belongs to the complex I 49 kDa subunit family. NDH-1 is composed of 14 different subunits. Subunits NuoB, C, D, E, F, and G constitute the peripheral sector of the complex.

The protein localises to the cell inner membrane. The catalysed reaction is a quinone + NADH + 5 H(+)(in) = a quinol + NAD(+) + 4 H(+)(out). NDH-1 shuttles electrons from NADH, via FMN and iron-sulfur (Fe-S) centers, to quinones in the respiratory chain. The immediate electron acceptor for the enzyme in this species is believed to be ubiquinone. Couples the redox reaction to proton translocation (for every two electrons transferred, four hydrogen ions are translocated across the cytoplasmic membrane), and thus conserves the redox energy in a proton gradient. In Bartonella tribocorum (strain CIP 105476 / IBS 506), this protein is NADH-quinone oxidoreductase subunit D.